The following is a 637-amino-acid chain: DNA gyrase subunit B (637 aa).

Residues 422 to 536 (CEVYIVEGDS…AGYVYLAMPP (115 aa)) form the Toprim domain. Glutamate 428, aspartate 501, and aspartate 503 together coordinate Mg(2+).

The protein belongs to the type II topoisomerase GyrB family. Heterotetramer, composed of two GyrA and two GyrB chains. In the heterotetramer, GyrA contains the active site tyrosine that forms a transient covalent intermediate with DNA, while GyrB binds cofactors and catalyzes ATP hydrolysis. Requires Mg(2+) as cofactor. Mn(2+) is required as a cofactor. It depends on Ca(2+) as a cofactor.

It localises to the cytoplasm. It catalyses the reaction ATP-dependent breakage, passage and rejoining of double-stranded DNA.. In terms of biological role, a type II topoisomerase that negatively supercoils closed circular double-stranded (ds) DNA in an ATP-dependent manner to modulate DNA topology and maintain chromosomes in an underwound state. Negative supercoiling favors strand separation, and DNA replication, transcription, recombination and repair, all of which involve strand separation. Also able to catalyze the interconversion of other topological isomers of dsDNA rings, including catenanes and knotted rings. Type II topoisomerases break and join 2 DNA strands simultaneously in an ATP-dependent manner. This Treponema pallidum (strain Nichols) protein is DNA gyrase subunit B.